A 241-amino-acid polypeptide reads, in one-letter code: tRNA pseudouridine synthase B (241 aa).

Asp45 serves as the catalytic Nucleophile.

This sequence belongs to the pseudouridine synthase TruB family. Type 1 subfamily.

The catalysed reaction is uridine(55) in tRNA = pseudouridine(55) in tRNA. Its function is as follows. Responsible for synthesis of pseudouridine from uracil-55 in the psi GC loop of transfer RNAs. This chain is tRNA pseudouridine synthase B, found in Chlamydia muridarum (strain MoPn / Nigg).